The following is a 123-amino-acid chain: Large ribosomal subunit protein bL17 (123 aa).

Belongs to the bacterial ribosomal protein bL17 family. As to quaternary structure, part of the 50S ribosomal subunit. Contacts protein L32.

This is Large ribosomal subunit protein bL17 from Exiguobacterium sibiricum (strain DSM 17290 / CCUG 55495 / CIP 109462 / JCM 13490 / 255-15).